The following is a 375-amino-acid chain: UDP-4-amino-4,6-dideoxy-N-acetyl-beta-L-altrosamine transaminase (375 aa).

Residues Y6, 26–29 (KQLT), A56, and S178 contribute to the substrate site. N6-(pyridoxal phosphate)lysine is present on K183. Substrate is bound by residues N228 and 313–316 (QVHY).

Belongs to the DegT/DnrJ/EryC1 family.

The enzyme catalyses UDP-4-amino-4,6-dideoxy-N-acetyl-beta-L-altrosamine + 2-oxoglutarate = UDP-2-acetamido-2,6-dideoxy-beta-L-arabino-hex-4-ulose + L-glutamate. Functionally, catalyzes the second step in the biosynthesis of pseudaminic acid, a sialic-acid-like sugar that is used to modify flagellin. Uses UDP-2-acetamido-2,6-dideoxy-beta-L-arabino-4-hexulose as substrate producing UDP-4-amino-4,6-dideoxy-beta-L-AltNAc. The protein is UDP-4-amino-4,6-dideoxy-N-acetyl-beta-L-altrosamine transaminase (pseC) of Helicobacter pylori (strain ATCC 700392 / 26695) (Campylobacter pylori).